The primary structure comprises 1184 residues: DNA-directed RNA polymerase subunit beta (1184 aa).

Belongs to the RNA polymerase beta chain family. The RNAP catalytic core consists of 2 alpha, 1 beta, 1 beta' and 1 omega subunit. When a sigma factor is associated with the core the holoenzyme is formed, which can initiate transcription.

The enzyme catalyses RNA(n) + a ribonucleoside 5'-triphosphate = RNA(n+1) + diphosphate. DNA-dependent RNA polymerase catalyzes the transcription of DNA into RNA using the four ribonucleoside triphosphates as substrates. This is DNA-directed RNA polymerase subunit beta from Fusobacterium nucleatum subsp. nucleatum (strain ATCC 25586 / DSM 15643 / BCRC 10681 / CIP 101130 / JCM 8532 / KCTC 2640 / LMG 13131 / VPI 4355).